The sequence spans 141 residues: Pheromone-binding protein-related protein 6 (141 aa).

The signal sequence occupies residues 1 to 16; that stretch reads MVKYPLILLLIGCAAA. Cystine bridges form between C41-C72, C68-C120, and C111-C129.

It belongs to the PBP/GOBP family. Antenna. Mostly expressed in two types of sensory hairs, sensilla trichodea and small sensilla basiconica, in the ventro-lateral region of the third antennal segment (at protein level).

The protein resides in the secreted. This chain is Pheromone-binding protein-related protein 6 (Obp83b), found in Drosophila melanogaster (Fruit fly).